We begin with the raw amino-acid sequence, 89 residues long: Elongation factor 1-beta (89 aa).

This sequence belongs to the EF-1-beta/EF-1-delta family.

Promotes the exchange of GDP for GTP in EF-1-alpha/GDP, thus allowing the regeneration of EF-1-alpha/GTP that could then be used to form the ternary complex EF-1-alpha/GTP/AAtRNA. This Methanococcus maripaludis (strain C7 / ATCC BAA-1331) protein is Elongation factor 1-beta.